Reading from the N-terminus, the 82-residue chain is Turripeptide Lol6.1 (82 aa).

The first 23 residues, 1-23 (MRFHWIPTLTVLLVLSMSFGTEA), serve as a signal peptide directing secretion. The propeptide occupies 24-48 (IPXXXXXXXXXXXXXXXXXXXXXXX). Cystine bridges form between cysteine 54–cysteine 66, cysteine 58–cysteine 71, and cysteine 65–cysteine 77.

In terms of tissue distribution, expressed by the venom duct.

It localises to the secreted. In terms of biological role, acts as a neurotoxin by inhibiting an ion channel. The sequence is that of Turripeptide Lol6.1 from Iotyrris olangoensis (Sea snail).